A 382-amino-acid polypeptide reads, in one-letter code: Ribosomal RNA large subunit methyltransferase G (382 aa).

It belongs to the methyltransferase superfamily. RlmG family.

The protein localises to the cytoplasm. The enzyme catalyses guanosine(1835) in 23S rRNA + S-adenosyl-L-methionine = N(2)-methylguanosine(1835) in 23S rRNA + S-adenosyl-L-homocysteine + H(+). Functionally, specifically methylates the guanine in position 1835 (m2G1835) of 23S rRNA. The polypeptide is Ribosomal RNA large subunit methyltransferase G (Psychromonas ingrahamii (strain DSM 17664 / CCUG 51855 / 37)).